The primary structure comprises 1012 residues: 5'-3' exoribonuclease 2 (1012 aa).

The segment at 264–281 (GKCFLCGQEGHRAADCEG) adopts a CCHC-type zinc-finger fold. Disordered regions lie at residues 411 to 439 (VQQRQSERFRRDKARDKARDNARDNAQAS), 888 to 976 (TFKD…QRQV), and 990 to 1012 (QRKKEKYLRKKAKYAQGAPPKTA). Basic and acidic residues predominate over residues 415–433 (QSERFRRDKARDKARDNAR). Positions 904–914 (ITPKKMNSPQR) are enriched in polar residues. Basic and acidic residues-rich tracts occupy residues 918 to 928 (WKKDETPQSRE) and 950 to 962 (PQREFTREKKKEN). Over residues 990–1002 (QRKKEKYLRKKAK) the composition is skewed to basic residues.

The protein belongs to the 5'-3' exonuclease family. XRN2/RAT1 subfamily. As to expression, expressed in roots, leaves, stems and flowers.

It localises to the nucleus. Its function is as follows. Possesses 5'-&gt;3' exoribonuclease activity. Acts as an endogenous post-transcriptional gene silencing (PTGS) suppressor. Degrades miRNA-derived loops, excised during miRNA maturation in the nucleus. Involved in pre-rRNA processing. Involved in the primary exonucleolytic shortening of the 5' external transcribed spacer (5'ETS), required for endonucleolytic processing at site P by the U3 snoRNP complex. Involved with XRN3 in the 5'-end processing of 5.8S and 25S rRNAs. Contributes with XRN3 to polyadenylation-dependent nuclear RNA surveillance. Involved in the degradation of aberrant polyadenylated pre-rRNA through 5'-end processing. In Arabidopsis thaliana (Mouse-ear cress), this protein is 5'-3' exoribonuclease 2.